Consider the following 296-residue polypeptide: 4-diphosphocytidyl-2-C-methyl-D-erythritol kinase (296 aa).

Residue Lys19 is part of the active site. 102-112 is a binding site for ATP; it reads PMGAGLGGGSS. Residue Asp144 is part of the active site.

Belongs to the GHMP kinase family. IspE subfamily.

It catalyses the reaction 4-CDP-2-C-methyl-D-erythritol + ATP = 4-CDP-2-C-methyl-D-erythritol 2-phosphate + ADP + H(+). The protein operates within isoprenoid biosynthesis; isopentenyl diphosphate biosynthesis via DXP pathway; isopentenyl diphosphate from 1-deoxy-D-xylulose 5-phosphate: step 3/6. In terms of biological role, catalyzes the phosphorylation of the position 2 hydroxy group of 4-diphosphocytidyl-2C-methyl-D-erythritol. This is 4-diphosphocytidyl-2-C-methyl-D-erythritol kinase from Burkholderia pseudomallei (strain 1710b).